The following is a 107-amino-acid chain: Nucleoid-associated protein HNE_0371 (107 aa).

This sequence belongs to the YbaB/EbfC family. In terms of assembly, homodimer.

It localises to the cytoplasm. It is found in the nucleoid. Binds to DNA and alters its conformation. May be involved in regulation of gene expression, nucleoid organization and DNA protection. This Hyphomonas neptunium (strain ATCC 15444) protein is Nucleoid-associated protein HNE_0371.